A 213-amino-acid polypeptide reads, in one-letter code: Thiopurine S-methyltransferase (213 aa).

S-adenosyl-L-methionine-binding residues include Trp10, Leu45, Glu66, and Arg121.

The protein belongs to the class I-like SAM-binding methyltransferase superfamily. TPMT family.

Its subcellular location is the cytoplasm. The catalysed reaction is S-adenosyl-L-methionine + a thiopurine = S-adenosyl-L-homocysteine + a thiopurine S-methylether.. In Aliivibrio salmonicida (strain LFI1238) (Vibrio salmonicida (strain LFI1238)), this protein is Thiopurine S-methyltransferase.